We begin with the raw amino-acid sequence, 678 residues long: RNA helicase NPH-II (678 aa).

A Helicase ATP-binding domain is found at 175–351; that stretch reads FESWIHHVPV…EFFTESVFVH (177 aa). Residue 188–195 coordinates ATP; it reads GDTGVGKT. The DEXH box signature appears at 300–303; the sequence is DEVH. In terms of domain architecture, Helicase C-terminal spans 371 to 546; the sequence is SLNKFMYIEE…VFDLQLPEDL (176 aa).

It belongs to the DEAD box helicase family. DEAH subfamily. In terms of assembly, monomer.

The protein resides in the virion. The catalysed reaction is ATP + H2O = ADP + phosphate + H(+). NTP-dependent helicase that catalyzes unidirectional unwinding of 3'tailed duplex RNAs and plays an important role during transcription of early mRNAs, presumably by preventing R-loop formation behind the elongating RNA polymerase. Might also play a role in the export of newly synthesized mRNA chains out of the core into the cytoplasm. Required for replication and propagation of viral particles. The sequence is that of RNA helicase NPH-II (OPG084) from Oryctolagus cuniculus (Rabbit).